The chain runs to 283 residues: 9,11-endoperoxide prostaglandin H2 reductase (283 aa).

Residues 23-24 (VW) and D48 each bind NADP(+). The active-site Proton donor is the Y53. Position 111 (H111) interacts with substrate. NADP(+)-binding positions include 140–141 (SN), Q162, 188–193 (WSPLGS), 234–236 (KST), and 240–244 (RIQEN). Residues 264-283 (NEDKRIGGDPDNFFPGGEEA) form a disordered region.

It belongs to the aldo/keto reductase family. Monomer.

The protein localises to the cytoplasm. The catalysed reaction is prostaglandin F2alpha + NADP(+) = prostaglandin H2 + NADPH + H(+). It participates in lipid metabolism; prostaglandin biosynthesis. Functionally, catalyzes the NADP-dependent formation of prostaglandin F2-alpha from prostaglandin H2. Also has aldo/ketoreductase activity towards the synthetic substrates 9,10-phenanthrenequinone and p-nitrobenzaldehyde. In Trypanosoma cruzi (strain CL Brener), this protein is 9,11-endoperoxide prostaglandin H2 reductase.